A 126-amino-acid polypeptide reads, in one-letter code: Large ribosomal subunit protein bL20 (126 aa).

It belongs to the bacterial ribosomal protein bL20 family.

In terms of biological role, binds directly to 23S ribosomal RNA and is necessary for the in vitro assembly process of the 50S ribosomal subunit. It is not involved in the protein synthesizing functions of that subunit. This chain is Large ribosomal subunit protein bL20, found in Frankia casuarinae (strain DSM 45818 / CECT 9043 / HFP020203 / CcI3).